The sequence spans 397 residues: Acetate kinase (397 aa).

Asparagine 7 contributes to the Mg(2+) binding site. Lysine 14 contributes to the ATP binding site. Arginine 90 is a substrate binding site. Aspartate 147 (proton donor/acceptor) is an active-site residue. ATP contacts are provided by residues 207 to 211, 282 to 284, and 330 to 334; these read HLGNG, DFR, and GLGEN. Position 383 (glutamate 383) interacts with Mg(2+).

It belongs to the acetokinase family. In terms of assembly, homodimer. It depends on Mg(2+) as a cofactor. The cofactor is Mn(2+).

It is found in the cytoplasm. It carries out the reaction acetate + ATP = acetyl phosphate + ADP. The protein operates within metabolic intermediate biosynthesis; acetyl-CoA biosynthesis; acetyl-CoA from acetate: step 1/2. Functionally, catalyzes the formation of acetyl phosphate from acetate and ATP. Can also catalyze the reverse reaction. The protein is Acetate kinase of Clostridium botulinum (strain ATCC 19397 / Type A).